The chain runs to 957 residues: Glycine dehydrogenase (decarboxylating) (957 aa).

N6-(pyridoxal phosphate)lysine is present on Lys708.

It belongs to the GcvP family. In terms of assembly, the glycine cleavage system is composed of four proteins: P, T, L and H. It depends on pyridoxal 5'-phosphate as a cofactor.

It catalyses the reaction N(6)-[(R)-lipoyl]-L-lysyl-[glycine-cleavage complex H protein] + glycine + H(+) = N(6)-[(R)-S(8)-aminomethyldihydrolipoyl]-L-lysyl-[glycine-cleavage complex H protein] + CO2. The glycine cleavage system catalyzes the degradation of glycine. The P protein binds the alpha-amino group of glycine through its pyridoxal phosphate cofactor; CO(2) is released and the remaining methylamine moiety is then transferred to the lipoamide cofactor of the H protein. The protein is Glycine dehydrogenase (decarboxylating) of Shigella boydii serotype 18 (strain CDC 3083-94 / BS512).